Consider the following 151-residue polypeptide: Large ribosomal subunit protein bL9 (151 aa).

This sequence belongs to the bacterial ribosomal protein bL9 family.

Its function is as follows. Binds to the 23S rRNA. This Mycoplasmopsis agalactiae (strain NCTC 10123 / CIP 59.7 / PG2) (Mycoplasma agalactiae) protein is Large ribosomal subunit protein bL9.